We begin with the raw amino-acid sequence, 299 residues long: GTP cyclohydrolase FolE2 (299 aa).

Belongs to the GTP cyclohydrolase IV family.

It catalyses the reaction GTP + H2O = 7,8-dihydroneopterin 3'-triphosphate + formate + H(+). It functions in the pathway cofactor biosynthesis; 7,8-dihydroneopterin triphosphate biosynthesis; 7,8-dihydroneopterin triphosphate from GTP: step 1/1. Converts GTP to 7,8-dihydroneopterin triphosphate. This chain is GTP cyclohydrolase FolE2, found in Klebsiella pneumoniae.